A 372-amino-acid chain; its full sequence is Innexin-16 (372 aa).

4 consecutive transmembrane segments (helical) span residues 31–51, 106–126, 181–201, and 263–283; these read VVTT…NYVG, VPFL…FWII, LVMK…LNSF, and IFIF…GDFV. An N-linked (GlcNAc...) asparagine glycan is attached at Asn-352.

It belongs to the pannexin family.

Its subcellular location is the cell membrane. The protein localises to the cell junction. It is found in the gap junction. Its function is as follows. Structural component of the gap junctions. Required for signals downstream of defecation clock. The sequence is that of Innexin-16 (inx-16) from Caenorhabditis elegans.